We begin with the raw amino-acid sequence, 102 residues long: Gastrin/cholecystokinin-like peptide (102 aa).

The N-terminal stretch at 1 to 20 (MDKKVCVSILLAMLAIAALC) is a signal peptide. Positions 21–45 (RPMTELESARHGAQRKNSISDVSRR) are excised as a propeptide. Position 86 is a sulfotyrosine (Y86). F92 carries the post-translational modification Phenylalanine amide. A propeptide spanning residues 96–102 (SSEVTES) is cleaved from the precursor.

The protein belongs to the gastrin/cholecystokinin family. In terms of tissue distribution, expressed in antrum, duodenum, colon, pancreas, brain and testis. No expression found in kidney, lung, liver, skin or distal two-thirds of small intestine. In the brain, strongly expressed in the pituitary gland with moderate expression in the neural lobe, brain stem and hypothalamus.

Its subcellular location is the secreted. In terms of biological role, may control digestion processes. The chain is Gastrin/cholecystokinin-like peptide (GAST) from Aquarana catesbeiana (American bullfrog).